The following is a 429-amino-acid chain: D-inositol 3-phosphate glycosyltransferase (429 aa).

Position 20 (His20) interacts with 1D-myo-inositol 3-phosphate. UDP-N-acetyl-alpha-D-glucosamine contacts are provided by residues 26–27 (QP) and Gly34. 1D-myo-inositol 3-phosphate-binding positions include 31 to 36 (DAGGMN), Lys89, Tyr122, Thr146, and Arg166. Positions 240, 245, and 306 each coordinate UDP-N-acetyl-alpha-D-glucosamine. Mg(2+) is bound by residues Tyr315, Arg316, and Ala318. Residues Glu328 and Glu336 each coordinate UDP-N-acetyl-alpha-D-glucosamine. Thr342 contacts Mg(2+).

The protein belongs to the glycosyltransferase group 1 family. MshA subfamily. As to quaternary structure, homodimer.

It catalyses the reaction 1D-myo-inositol 3-phosphate + UDP-N-acetyl-alpha-D-glucosamine = 1D-myo-inositol 2-acetamido-2-deoxy-alpha-D-glucopyranoside 3-phosphate + UDP + H(+). Functionally, catalyzes the transfer of a N-acetyl-glucosamine moiety to 1D-myo-inositol 3-phosphate to produce 1D-myo-inositol 2-acetamido-2-deoxy-glucopyranoside 3-phosphate in the mycothiol biosynthesis pathway. The chain is D-inositol 3-phosphate glycosyltransferase from Nocardiopsis dassonvillei (strain ATCC 23218 / DSM 43111 / CIP 107115 / JCM 7437 / KCTC 9190 / NBRC 14626 / NCTC 10488 / NRRL B-5397 / IMRU 509) (Actinomadura dassonvillei).